The following is a 796-amino-acid chain: Ent-copalyl diphosphate synthase 4 (796 aa).

Residues 1–23 (MSSSSIVTSLLRPTTAADGVLPR) constitute a chloroplast transit peptide. Residue Lys240 coordinates substrate. Positions 371 and 373 each coordinate Mg(2+). The DXDD motif motif lies at 371–374 (DVDD). Lys457 serves as a coordination point for substrate.

Belongs to the terpene synthase family. Tpsc subfamily. It depends on Mg(2+) as a cofactor. In terms of tissue distribution, highly expressed in leaves, and, at low levels, in stems, but barely in roots and flowers.

Its subcellular location is the plastid. It localises to the chloroplast. The catalysed reaction is (2E,6E,10E)-geranylgeranyl diphosphate = ent-copalyl diphosphate. Its pathway is secondary metabolite biosynthesis; terpenoid biosynthesis. Functionally, involved in the biosynthesis of ent-kaurene diterpenoids natural products such as oridonin, miltiradiene, eriocalyxin B and nezukol, known to exhibit antitumor, anti-inflammatory and antibacterial activities. Catalyzes the conversion of (2E,6E,10E)-geranylgeranyl diphosphate (GGPP) to ent-copalyl diphosphate (ent-CPP). The sequence is that of Ent-copalyl diphosphate synthase 4 from Isodon rubescens (Rabdosia rubescens).